We begin with the raw amino-acid sequence, 594 residues long: Nucleolar protein 56 (594 aa).

Glycyl lysine isopeptide (Lys-Gly) (interchain with G-Cter in SUMO2) cross-links involve residues K87, K230, and K240. One can recognise a Nop domain in the interval V292–T410. S314 carries the phosphoserine modification. R359 carries the omega-N-methylarginine modification. 2 stretches are compositionally biased toward low complexity: residues A458 to P469 and Q488 to S504. Residues A458–D594 form a disordered region. 2 positions are modified to phosphoserine: S466 and S467. T468 is modified (phosphothreonine). A phosphoserine mark is found at S511, S519, S520, and S537. K540 is covalently cross-linked (Glycyl lysine isopeptide (Lys-Gly) (interchain with G-Cter in SUMO2)). K561 bears the N6-acetyllysine mark. S563 bears the Phosphoserine mark. A Glycyl lysine isopeptide (Lys-Gly) (interchain with G-Cter in SUMO2) cross-link involves residue K564. S569, S570, S579, and S581 each carry phosphoserine. A compositionally biased stretch (basic residues) spans S580 to D594.

This sequence belongs to the NOP5/NOP56 family. As to quaternary structure, part of a large pre-ribosomal ribonucleoprotein (RNP) complex, that consists of at least 62 ribosomal proteins, 45 nonribosomal proteins and both pre-rRNA and mature rRNA species. Within this complex directly interacts with TCOF1 in an RNA-independent manner. Core component of box C/D small nucleolar ribonucleoprotein (snoRNP) particles; the core proteins SNU13, NOP56, NOP58 and FBL or FBLL1 assemble stepwise onto the snoRNA. Interacts with NOP1 and NOP58. Interacts with NUFIP1, RUVBL1 and RUVBL2; RUVBL1:RUVBL2 seem to bridge the association of NOP56 with NUFIP1. Part of the small subunit (SSU) processome, composed of more than 70 proteins and the RNA chaperone small nucleolar RNA (snoRNA) U3. Interacts with NOP2 and FBL.

It is found in the nucleus. The protein resides in the nucleolus. The protein localises to the cytoplasm. Its subcellular location is the nucleoplasm. Functionally, involved in the early to middle stages of 60S ribosomal subunit biogenesis. Required for the biogenesis of box C/D snoRNAs such U3, U8 and U14 snoRNAs. Part of the small subunit (SSU) processome, first precursor of the small eukaryotic ribosomal subunit. During the assembly of the SSU processome in the nucleolus, many ribosome biogenesis factors, an RNA chaperone and ribosomal proteins associate with the nascent pre-rRNA and work in concert to generate RNA folding, modifications, rearrangements and cleavage as well as targeted degradation of pre-ribosomal RNA by the RNA exosome. Core component of box C/D small nucleolar ribonucleoprotein (snoRNP) complexes that function in methylation of multiple sites on ribosomal RNAs (rRNAs) and messenger RNAs (mRNAs). In Homo sapiens (Human), this protein is Nucleolar protein 56.